The sequence spans 99 residues: uncharacterized protein (99 aa).

The signal sequence occupies residues 1-17 (MMMNAFFPAMALMVLVG). Cysteine 18 carries N-palmitoyl cysteine lipidation. Cysteine 18 carries the S-diacylglycerol cysteine lipid modification.

The protein localises to the cell membrane. This is an uncharacterized protein from Shigella boydii serotype 4 (strain Sb227).